We begin with the raw amino-acid sequence, 555 residues long: Cilia- and flagella-associated protein 184 (555 aa).

Basic and acidic residues predominate over residues 1-12; it reads MDVSSEHTKDPG. The tract at residues 1–202 is disordered; the sequence is MDVSSEHTKD…KSQEEGKRLY (202 aa). Composition is skewed to acidic residues over residues 41–54 and 95–105; these read GELE…EEEQ and PEPEEPAEVGA. A compositionally biased stretch (low complexity) spans 106 to 117; it reads EEPAQPEPGAGP. Acidic residues predominate over residues 118-131; it reads EELEAEAGAEELEQ. Basic and acidic residues predominate over residues 174-202; that stretch reads ETQRDGAESKERDGEGRPAKSQEEGKRLY. Coiled coils occupy residues 305 to 441 and 505 to 531; these read YHQE…NSVQ and DSLL…LKRH.

It belongs to the CFAP184 family. As to quaternary structure, forms a complex with CFAP263; the interaction is required for functional activity in cilia.

Its subcellular location is the cell projection. It localises to the cilium. The protein resides in the cytoplasm. The protein localises to the cytoskeleton. It is found in the microtubule organizing center. Its subcellular location is the centrosome. In complex with CFAP263, acts as a regulator of ciliary beating that connects radial spoke 3 (RS3) to the inner dynein arm (IDA) and the nexin-dynein regulatory complex (N-DRC). The complex is positioned parallel to N-DRC and forms a connection between the arch at the base of RS3, the IDA tail and N-DRC. The protein is Cilia- and flagella-associated protein 184 of Homo sapiens (Human).